A 630-amino-acid chain; its full sequence is uncharacterized protein (630 aa).

2 helical membrane-spanning segments follow: residues 8–28 (LFNM…ASAV) and 258–278 (VDNS…PLVI). The segment at 399–426 (EETSKPTEQPSPADSTSTPAAPEKGAAS) is disordered. Residues 404–417 (PTEQPSPADSTSTP) show a composition bias toward polar residues.

The protein belongs to the peptidase S1C family.

It localises to the cell membrane. This is an uncharacterized protein from Sinorhizobium fredii (strain NBRC 101917 / NGR234).